The primary structure comprises 395 residues: Dihydroorotate dehydrogenase (quinone), mitochondrial (395 aa).

The transit peptide at 1–10 (MAWRQLKKRA) directs the protein to the mitochondrion; not cleaved. Over 1–10 (MAWRQLKKRA) the chain is Mitochondrial matrix. Residues 11-30 (QDAMVILGGGGLLFASYLTA) form a helical membrane-spanning segment. Topologically, residues 31–395 (TGDEHFYAEL…TDAIGADHRR (365 aa)) are mitochondrial intermembrane. FMN-binding positions include 95 to 99 (AGFDK) and serine 119. Lysine 99 contacts substrate. 144–148 (NRYGF) contacts substrate. Positions 180 and 211 each coordinate FMN. 211–216 (NVSSPN) is a binding site for substrate. The active-site Nucleophile is the serine 214. Residues lysine 254 and threonine 282 each coordinate FMN. 283–284 (NS) serves as a coordination point for substrate. FMN-binding positions include glycine 305, glycine 334, and 355–356 (YT).

Belongs to the dihydroorotate dehydrogenase family. Type 2 subfamily. Monomer. FMN is required as a cofactor. Post-translationally, the uncleaved transit peptide is required for mitochondrial targeting and proper membrane integration.

It localises to the mitochondrion inner membrane. The catalysed reaction is (S)-dihydroorotate + a quinone = orotate + a quinol. Its pathway is pyrimidine metabolism; UMP biosynthesis via de novo pathway; orotate from (S)-dihydroorotate (quinone route): step 1/1. Functionally, catalyzes the conversion of dihydroorotate to orotate with quinone as electron acceptor. Required for UMP biosynthesis via de novo pathway. This is Dihydroorotate dehydrogenase (quinone), mitochondrial (DHODH) from Bos taurus (Bovine).